Here is a 133-residue protein sequence, read N- to C-terminus: Phosphoribosyl-AMP cyclohydrolase (133 aa).

D82 provides a ligand contact to Mg(2+). C83 contacts Zn(2+). Residues D84 and D86 each contribute to the Mg(2+) site. Positions 100 and 107 each coordinate Zn(2+).

This sequence belongs to the PRA-CH family. Homodimer. Requires Mg(2+) as cofactor. Zn(2+) serves as cofactor.

The protein resides in the cytoplasm. The catalysed reaction is 1-(5-phospho-beta-D-ribosyl)-5'-AMP + H2O = 1-(5-phospho-beta-D-ribosyl)-5-[(5-phospho-beta-D-ribosylamino)methylideneamino]imidazole-4-carboxamide. Its pathway is amino-acid biosynthesis; L-histidine biosynthesis; L-histidine from 5-phospho-alpha-D-ribose 1-diphosphate: step 3/9. Its function is as follows. Catalyzes the hydrolysis of the adenine ring of phosphoribosyl-AMP. The chain is Phosphoribosyl-AMP cyclohydrolase from Aromatoleum aromaticum (strain DSM 19018 / LMG 30748 / EbN1) (Azoarcus sp. (strain EbN1)).